Reading from the N-terminus, the 101-residue chain is Protein Tat (101 aa).

The segment at Met1–Lys24 is interaction with human CREBBP. The transactivation stretch occupies residues Met1–Gly48. Cys22, Cys25, and Cys27 together coordinate Zn(2+). The interval Cys22–Cys37 is cysteine-rich. Lys28 is modified (N6-acetyllysine; by host PCAF). Zn(2+) is bound by residues Cys30, His33, Cys34, and Cys37. Residues Phe38–Gly48 form a core region. Residues Gly48 to Gly57 are compositionally biased toward basic residues. A disordered region spans residues Gly48–Asp101. The Nuclear localization signal, RNA-binding (TAR), and protein transduction signature appears at Arg49–Gly57. Residues Arg49–Glu86 are interaction with the host capping enzyme RNGTT. N6-acetyllysine; by host EP300 and GCN5L2 is present on residues Lys50 and Lys51. Asymmetric dimethylarginine; by host PRMT6 is present on Arg52. Lys71 participates in a covalent cross-link: Glycyl lysine isopeptide (Lys-Gly) (interchain with G-Cter in ubiquitin). The segment covering Lys85–Asp101 has biased composition (basic and acidic residues).

Belongs to the lentiviruses Tat family. In terms of assembly, interacts with host CCNT1. Associates with the P-TEFb complex composed at least of Tat, P-TEFb (CDK9 and CCNT1), TAR RNA, RNA Pol II. Recruits the HATs CREBBP, TAF1/TFIID, EP300, PCAF and GCN5L2. Interacts with host KAT5/Tip60; this interaction targets the latter to degradation. Interacts with the host deacetylase SIRT1. Interacts with host capping enzyme RNGTT; this interaction stimulates RNGTT. Binds to host KDR, and to the host integrins ITGAV/ITGB3 and ITGA5/ITGB1. Interacts with host KPNB1/importin beta-1 without previous binding to KPNA1/importin alpha-1. Interacts with EIF2AK2. Interacts with host nucleosome assembly protein NAP1L1; this interaction may be required for the transport of Tat within the nucleus, since the two proteins interact at the nuclear rim. Interacts with host C1QBP/SF2P32; this interaction involves lysine-acetylated Tat. Interacts with the host chemokine receptors CCR2, CCR3 and CXCR4. Interacts with host DPP4/CD26; this interaction may trigger an anti-proliferative effect. Interacts with host LDLR. Interacts with the host extracellular matrix metalloproteinase MMP1. Interacts with host PRMT6; this interaction mediates Tat's methylation. Interacts with, and is ubiquitinated by MDM2/Hdm2. Interacts with host PSMC3 and HTATIP2. Interacts with STAB1; this interaction may overcome SATB1-mediated repression of IL2 and IL2RA (interleukin) in T cells by binding to the same domain than HDAC1. Interacts (when acetylated) with human CDK13, thereby increasing HIV-1 mRNA splicing and promoting the production of the doubly spliced HIV-1 protein Nef. Interacts with host TBP; this interaction modulates the activity of transcriptional pre-initiation complex. Interacts with host RELA. Interacts with host PLSCR1; this interaction negatively regulates Tat transactivation activity by altering its subcellular distribution. In terms of processing, asymmetrical arginine methylation by host PRMT6 seems to diminish the transactivation capacity of Tat and affects the interaction with host CCNT1. Acetylation by EP300, CREBBP, GCN5L2/GCN5 and PCAF regulates the transactivation activity of Tat. EP300-mediated acetylation of Lys-50 promotes dissociation of Tat from the TAR RNA through the competitive binding to PCAF's bromodomain. In addition, the non-acetylated Tat's N-terminus can also interact with PCAF. PCAF-mediated acetylation of Lys-28 enhances Tat's binding to CCNT1. Lys-50 is deacetylated by SIRT1. Post-translationally, polyubiquitination by host MDM2 does not target Tat to degradation, but activates its transactivation function and fosters interaction with CCNT1 and TAR RNA. In terms of processing, phosphorylated by EIF2AK2 on serine and threonine residues adjacent to the basic region important for TAR RNA binding and function. Phosphorylation of Tat by EIF2AK2 is dependent on the prior activation of EIF2AK2 by dsRNA.

The protein resides in the host nucleus. Its subcellular location is the host nucleolus. It is found in the host cytoplasm. The protein localises to the secreted. In terms of biological role, transcriptional activator that increases RNA Pol II processivity, thereby increasing the level of full-length viral transcripts. Recognizes a hairpin structure at the 5'-LTR of the nascent viral mRNAs referred to as the transactivation responsive RNA element (TAR) and recruits the cyclin T1-CDK9 complex (P-TEFb complex) that will in turn hyperphosphorylate the RNA polymerase II to allow efficient elongation. The CDK9 component of P-TEFb and other Tat-activated kinases hyperphosphorylate the C-terminus of RNA Pol II that becomes stabilized and much more processive. Other factors such as HTATSF1/Tat-SF1, SUPT5H/SPT5, and HTATIP2 are also important for Tat's function. Besides its effect on RNA Pol II processivity, Tat induces chromatin remodeling of proviral genes by recruiting the histone acetyltransferases (HATs) CREBBP, EP300 and PCAF to the chromatin. This also contributes to the increase in proviral transcription rate, especially when the provirus integrates in transcriptionally silent region of the host genome. To ensure maximal activation of the LTR, Tat mediates nuclear translocation of NF-kappa-B by interacting with host RELA. Through its interaction with host TBP, Tat may also modulate transcription initiation. Tat can reactivate a latently infected cell by penetrating in it and transactivating its LTR promoter. In the cytoplasm, Tat is thought to act as a translational activator of HIV-1 mRNAs. Its function is as follows. Extracellular circulating Tat can be endocytosed by surrounding uninfected cells via the binding to several surface receptors such as CD26, CXCR4, heparan sulfate proteoglycans (HSPG) or LDLR. Neurons are rarely infected, but they internalize Tat via their LDLR. Through its interaction with nuclear HATs, Tat is potentially able to control the acetylation-dependent cellular gene expression. Modulates the expression of many cellular genes involved in cell survival, proliferation or in coding for cytokines or cytokine receptors. Tat plays a role in T-cell and neurons apoptosis. Tat induced neurotoxicity and apoptosis probably contribute to neuroAIDS. Circulating Tat also acts as a chemokine-like and/or growth factor-like molecule that binds to specific receptors on the surface of the cells, affecting many cellular pathways. In the vascular system, Tat binds to ITGAV/ITGB3 and ITGA5/ITGB1 integrins dimers at the surface of endothelial cells and competes with bFGF for heparin-binding sites, leading to an excess of soluble bFGF. The polypeptide is Protein Tat (Homo sapiens (Human)).